The sequence spans 1225 residues: Hybrid signal transduction histidine kinase C (1225 aa).

Residues 8–28 (GFLLSTLFFTIISIILFYFFI) form a helical membrane-spanning segment. The span at 313–356 (LSPRSLSSSSSSSPSSSNNNGNTNNSGSLSPRSSNSNGSAVSPR) shows a compositional bias: low complexity. The interval 313–407 (LSPRSLSSSS…SNGTISSPRT (95 aa)) is disordered. Positions 357 to 368 (NVSSNSMSPRGQ) are enriched in polar residues. Residues 370 to 388 (SDRSISSPRGSSSSSSSSS) show a composition bias toward low complexity. Residues 389-407 (NELAISPRNSNGTISSPRT) are compositionally biased toward polar residues. The 228-residue stretch at 426-653 (HLSHELRTPI…TFHFVIPLET (228 aa)) folds into the Histidine kinase domain. Position 429 is a phosphohistidine; by autocatalysis (histidine 429). The region spanning 669–784 (SVLVVDKNPY…HLVACLLASM (116 aa)) is the Response regulatory 1 domain. 4-aspartylphosphate is present on aspartate 721. Disordered stretches follow at residues 809–832 (NNIN…SVYG), 941–974 (DDDS…DELN), and 1021–1076 (YLSP…PRAP). Residues 945-954 (NNYCNTTGTM) are compositionally biased toward polar residues. Residues 1023–1037 (SPRSMNNNNGNNDNG) show a composition bias toward low complexity. The segment covering 1058-1072 (TSDTSSLAQSPNSLS) has biased composition (polar residues). A Response regulatory 2 domain is found at 1078–1200 (KIMILDDNPV…CLELILRKWE (123 aa)). Aspartate 1127 bears the 4-aspartylphosphate mark.

Its subcellular location is the membrane. It catalyses the reaction ATP + protein L-histidine = ADP + protein N-phospho-L-histidine.. In terms of biological role, acts in a signal transduction pathway that regulates the slug versus culmination choice. Believed to be the first component of a phosphorelay that couples the sensing of ammonia to the modulation of PKA activity and hence activates culmination and spore germination. Ammonium transporters amtA and amtC are thought to respectively activate and inhibit dhkC phosphorelay. This protein probably undergoes an ATP-dependent autophosphorylation at conserved His residue in the kinase core, and a phosphoryl group is then transferred to a conserved aspartate residue in the receiver domain. The polypeptide is Hybrid signal transduction histidine kinase C (dhkC) (Dictyostelium discoideum (Social amoeba)).